The following is a 376-amino-acid chain: Alanine racemase (376 aa).

Lysine 44 functions as the Proton acceptor; specific for D-alanine in the catalytic mechanism. Lysine 44 carries the N6-(pyridoxal phosphate)lysine modification. Substrate is bound at residue arginine 139. The Proton acceptor; specific for L-alanine role is filled by tyrosine 271. A substrate-binding site is contributed by methionine 319.

This sequence belongs to the alanine racemase family. Pyridoxal 5'-phosphate is required as a cofactor.

It catalyses the reaction L-alanine = D-alanine. Its pathway is amino-acid biosynthesis; D-alanine biosynthesis; D-alanine from L-alanine: step 1/1. In terms of biological role, catalyzes the interconversion of L-alanine and D-alanine. May also act on other amino acids. In Bordetella petrii (strain ATCC BAA-461 / DSM 12804 / CCUG 43448), this protein is Alanine racemase (alr).